Reading from the N-terminus, the 312-residue chain is Pyridoxal kinase (312 aa).

Methionine 1 is subject to N-acetylmethionine. Residues serine 12 and threonine 47 each contribute to the pyridoxal site. Residue threonine 47 participates in pyridoxal 5'-phosphate binding. Position 59 is a phosphoserine (serine 59). Aspartate 113 lines the ATP pocket. Aspartate 113 provides a ligand contact to Na(+). A Mg(2+)-binding site is contributed by aspartate 118. Threonine 148 is a binding site for Na(+). Position 150–153 (150–153 (NQFE)) interacts with ATP. Serine 164 bears the Phosphoserine mark. Threonine 186 is a binding site for Na(+). ATP is bound at residue 186-187 (TS). Serine 213 carries the phosphoserine modification. ATP contacts are provided by residues 226–228 (VDP) and threonine 233. 234–235 (GD) contributes to the pyridoxal 5'-phosphate binding site. Aspartate 235 serves as the catalytic Proton acceptor. Position 285 is a phosphoserine (serine 285).

Belongs to the pyridoxine kinase family. Homodimer. It depends on Zn(2+) as a cofactor. Mg(2+) is required as a cofactor.

It is found in the cytoplasm. The protein localises to the cytosol. The catalysed reaction is pyridoxal + ATP = pyridoxal 5'-phosphate + ADP + H(+). It catalyses the reaction pyridoxamine + ATP = pyridoxamine 5'-phosphate + ADP + H(+). The enzyme catalyses pyridoxine + ATP = pyridoxine 5'-phosphate + ADP + H(+). It participates in cofactor metabolism; pyridoxal 5'-phosphate salvage; pyridoxal 5'-phosphate from pyridoxal: step 1/1. Its pathway is cofactor metabolism; pyridoxal 5'-phosphate salvage; pyridoxine 5'-phosphate from pyridoxine: step 1/1. The protein operates within cofactor metabolism; pyridoxal 5'-phosphate salvage; pyridoxamine 5'-phosphate from pyridoxamine: step 1/1. With respect to regulation, activity is increased in the presence of K(+)or Na(+). Catalyzes the phosphorylation of the dietary vitamin B6 vitamers pyridoxal (PL), pyridoxine (PN) and pyridoxamine (PM) to form pyridoxal 5'-phosphate (PLP), pyridoxine 5'-phosphate (PNP) and pyridoxamine 5'-phosphate (PMP), respectively. PLP is the active form of vitamin B6, and acts as a cofactor for over 140 different enzymatic reactions. This chain is Pyridoxal kinase (Pdxk), found in Rattus norvegicus (Rat).